The chain runs to 338 residues: Glyceraldehyde-3-phosphate dehydrogenase (338 aa).

NAD(+)-binding positions include 12 to 13 (RI), D34, and R79. D-glyceraldehyde 3-phosphate contacts are provided by residues 150 to 152 (SCT), T181, 210 to 211 (TG), and R233. C151 acts as the Nucleophile in catalysis. N316 serves as a coordination point for NAD(+).

This sequence belongs to the glyceraldehyde-3-phosphate dehydrogenase family. As to quaternary structure, homotetramer.

The protein resides in the cytoplasm. It catalyses the reaction D-glyceraldehyde 3-phosphate + phosphate + NAD(+) = (2R)-3-phospho-glyceroyl phosphate + NADH + H(+). Its pathway is carbohydrate degradation; glycolysis; pyruvate from D-glyceraldehyde 3-phosphate: step 1/5. In Phaffia rhodozyma (Yeast), this protein is Glyceraldehyde-3-phosphate dehydrogenase (GPD).